A 238-amino-acid chain; its full sequence is 2-C-methyl-D-erythritol 4-phosphate cytidylyltransferase (238 aa).

This sequence belongs to the IspD/TarI cytidylyltransferase family. IspD subfamily.

It catalyses the reaction 2-C-methyl-D-erythritol 4-phosphate + CTP + H(+) = 4-CDP-2-C-methyl-D-erythritol + diphosphate. It participates in isoprenoid biosynthesis; isopentenyl diphosphate biosynthesis via DXP pathway; isopentenyl diphosphate from 1-deoxy-D-xylulose 5-phosphate: step 2/6. Its function is as follows. Catalyzes the formation of 4-diphosphocytidyl-2-C-methyl-D-erythritol from CTP and 2-C-methyl-D-erythritol 4-phosphate (MEP). In Shewanella amazonensis (strain ATCC BAA-1098 / SB2B), this protein is 2-C-methyl-D-erythritol 4-phosphate cytidylyltransferase.